The following is a 98-amino-acid chain: NADH-ubiquinone oxidoreductase chain 4L (98 aa).

Helical transmembrane passes span 1–21 (MSMV…GLLV), 29–49 (SLLC…ITIL), and 61–81 (IILL…LVMV).

Belongs to the complex I subunit 4L family. As to quaternary structure, core subunit of respiratory chain NADH dehydrogenase (Complex I) which is composed of 45 different subunits.

It is found in the mitochondrion inner membrane. It carries out the reaction a ubiquinone + NADH + 5 H(+)(in) = a ubiquinol + NAD(+) + 4 H(+)(out). Functionally, core subunit of the mitochondrial membrane respiratory chain NADH dehydrogenase (Complex I) which catalyzes electron transfer from NADH through the respiratory chain, using ubiquinone as an electron acceptor. Part of the enzyme membrane arm which is embedded in the lipid bilayer and involved in proton translocation. This is NADH-ubiquinone oxidoreductase chain 4L (MT-ND4L) from Mephitis mephitis (Striped skunk).